The chain runs to 509 residues: tRNA-2-methylthio-N(6)-dimethylallyladenosine synthase (509 aa).

The segment covering 1–15 (MNEQQRLASQQVNSS) has biased composition (polar residues). The segment at 1-23 (MNEQQRLASQQVNSSTKKEEKDY) is disordered. One can recognise an MTTase N-terminal domain in the interval 66–184 (RKFYIRTYGC…LPYILKDAMF (119 aa)). Residues cysteine 75, cysteine 111, cysteine 145, cysteine 221, cysteine 225, and cysteine 228 each contribute to the [4Fe-4S] cluster site. Residues 207-437 (RRGDIKAWVN…NALVNKLAIE (231 aa)) form the Radical SAM core domain. Positions 440–503 (DRYKGQIVEV…TWSLNGELVE (64 aa)) constitute a TRAM domain.

The protein belongs to the methylthiotransferase family. MiaB subfamily. Monomer. It depends on [4Fe-4S] cluster as a cofactor.

The protein resides in the cytoplasm. The catalysed reaction is N(6)-dimethylallyladenosine(37) in tRNA + (sulfur carrier)-SH + AH2 + 2 S-adenosyl-L-methionine = 2-methylsulfanyl-N(6)-dimethylallyladenosine(37) in tRNA + (sulfur carrier)-H + 5'-deoxyadenosine + L-methionine + A + S-adenosyl-L-homocysteine + 2 H(+). Catalyzes the methylthiolation of N6-(dimethylallyl)adenosine (i(6)A), leading to the formation of 2-methylthio-N6-(dimethylallyl)adenosine (ms(2)i(6)A) at position 37 in tRNAs that read codons beginning with uridine. This Bacillus anthracis protein is tRNA-2-methylthio-N(6)-dimethylallyladenosine synthase.